Reading from the N-terminus, the 471-residue chain is MAGEMTILGSAVLTLLLAGYLAQQYLPLPTPKVIGIDLGTTYCSVGVFFPGTGKVKVIPDENGHISIPSMVSFTDGDVYVGYESLELADSNPQNTIYDAKRFIGKIFTPEELEAEIGRYPFKVLHKNGMAEFSVTSNETIIVSPEYVGSRLLLKLKEMAEKYLGMPVANAVISVPAEFDLQQRNSTIQAANLAGLKILRVINEPTAAAMAYGLHKVDVFYVLVIDLGGGTLDVSLLNKQGGMFLTRAMSGNNKLGGQDFNQRLLQYLYKEIYQTYGFLPSRKEEIHRLRQAVEMVKLNLTLHQSAQVSVLLTVEENDSQKPQNADSKLPEDQLTPGDGHHVNRVFRPGLSDSTSGKSQVLFETEVSRKLFNTLNEDLFQKILVPIQQVLKEGLLDKTEIDEVVLVGGSTRIPRIRQVIQEFFGKDPNTSVDPDLAVVTGVAIQAGIDGGSWPLQVSALEIPNKHLQKTNFN.

An N-terminal signal peptide occupies residues Met1 to Ala22. A glycan (N-linked (GlcNAc...) asparagine) is linked at Asn184. Residues Asn316–His339 are disordered.

The protein belongs to the heat shock protein 70 family. As to quaternary structure, binds UBQLN2.

It localises to the microsome. The protein localises to the endoplasmic reticulum. In terms of biological role, has peptide-independent ATPase activity. The sequence is that of Heat shock 70 kDa protein 13 (Hspa13) from Rattus norvegicus (Rat).